The sequence spans 376 residues: Queuine tRNA-ribosyltransferase (376 aa).

D89 functions as the Proton acceptor in the catalytic mechanism. Residues 89 to 93 (DSGGF), D143, Q187, and G214 contribute to the substrate site. The tract at residues 245–251 (GVGKPQD) is RNA binding. D264 acts as the Nucleophile in catalysis. The tract at residues 269 to 273 (TRNAR) is RNA binding; important for wobble base 34 recognition. Positions 302, 304, 307, and 333 each coordinate Zn(2+).

Belongs to the queuine tRNA-ribosyltransferase family. In terms of assembly, homodimer. Within each dimer, one monomer is responsible for RNA recognition and catalysis, while the other monomer binds to the replacement base PreQ1. Requires Zn(2+) as cofactor.

The enzyme catalyses 7-aminomethyl-7-carbaguanine + guanosine(34) in tRNA = 7-aminomethyl-7-carbaguanosine(34) in tRNA + guanine. It functions in the pathway tRNA modification; tRNA-queuosine biosynthesis. Functionally, catalyzes the base-exchange of a guanine (G) residue with the queuine precursor 7-aminomethyl-7-deazaguanine (PreQ1) at position 34 (anticodon wobble position) in tRNAs with GU(N) anticodons (tRNA-Asp, -Asn, -His and -Tyr). Catalysis occurs through a double-displacement mechanism. The nucleophile active site attacks the C1' of nucleotide 34 to detach the guanine base from the RNA, forming a covalent enzyme-RNA intermediate. The proton acceptor active site deprotonates the incoming PreQ1, allowing a nucleophilic attack on the C1' of the ribose to form the product. After dissociation, two additional enzymatic reactions on the tRNA convert PreQ1 to queuine (Q), resulting in the hypermodified nucleoside queuosine (7-(((4,5-cis-dihydroxy-2-cyclopenten-1-yl)amino)methyl)-7-deazaguanosine). This Erwinia tasmaniensis (strain DSM 17950 / CFBP 7177 / CIP 109463 / NCPPB 4357 / Et1/99) protein is Queuine tRNA-ribosyltransferase.